Here is a 66-residue protein sequence, read N- to C-terminus: Large ribosomal subunit protein uL29 (66 aa).

Belongs to the universal ribosomal protein uL29 family.

This Rhizobium johnstonii (strain DSM 114642 / LMG 32736 / 3841) (Rhizobium leguminosarum bv. viciae) protein is Large ribosomal subunit protein uL29.